The chain runs to 260 residues: Hydroxyethylthiazole kinase 1 (260 aa).

A substrate-binding site is contributed by methionine 39. The ATP site is built by arginine 115 and threonine 160. Position 187 (glycine 187) interacts with substrate.

This sequence belongs to the Thz kinase family. Mg(2+) is required as a cofactor.

The enzyme catalyses 5-(2-hydroxyethyl)-4-methylthiazole + ATP = 4-methyl-5-(2-phosphooxyethyl)-thiazole + ADP + H(+). The protein operates within cofactor biosynthesis; thiamine diphosphate biosynthesis; 4-methyl-5-(2-phosphoethyl)-thiazole from 5-(2-hydroxyethyl)-4-methylthiazole: step 1/1. Its function is as follows. Catalyzes the phosphorylation of the hydroxyl group of 4-methyl-5-beta-hydroxyethylthiazole (THZ). This Streptococcus pneumoniae serotype 4 (strain ATCC BAA-334 / TIGR4) protein is Hydroxyethylthiazole kinase 1.